Here is a 214-residue protein sequence, read N- to C-terminus: Adenylate kinase (214 aa).

Residue 10–15 (GAGKGT) participates in ATP binding. The interval 30–59 (STGDMLRAAVKAGTELGKQAKEIMDAGKLV) is NMP. AMP contacts are provided by residues Thr31, Arg36, 57–59 (KLV), 85–88 (GFPR), and Gln92. An LID region spans residues 122-159 (GRRVHAASGRVYHVKFNPPKVEGKDDVTGEDLTIRKDD). ATP-binding positions include Arg123 and 132–133 (VY). 2 residues coordinate AMP: Arg156 and Arg167. Arg200 provides a ligand contact to ATP.

Belongs to the adenylate kinase family. As to quaternary structure, monomer.

Its subcellular location is the cytoplasm. It catalyses the reaction AMP + ATP = 2 ADP. The protein operates within purine metabolism; AMP biosynthesis via salvage pathway; AMP from ADP: step 1/1. Catalyzes the reversible transfer of the terminal phosphate group between ATP and AMP. Plays an important role in cellular energy homeostasis and in adenine nucleotide metabolism. The protein is Adenylate kinase of Pectobacterium carotovorum subsp. carotovorum (strain PC1).